A 131-amino-acid chain; its full sequence is Small ribosomal subunit protein uS8c (131 aa).

Belongs to the universal ribosomal protein uS8 family. In terms of assembly, part of the 30S ribosomal subunit.

Its subcellular location is the plastid. The protein localises to the chloroplast. One of the primary rRNA binding proteins, it binds directly to 16S rRNA central domain where it helps coordinate assembly of the platform of the 30S subunit. The protein is Small ribosomal subunit protein uS8c (rps8) of Tupiella akineta (Green alga).